A 151-amino-acid polypeptide reads, in one-letter code: NADPH-dependent 7-cyano-7-deazaguanine reductase (151 aa).

Residue C51 is the Thioimide intermediate of the active site. D58 functions as the Proton donor in the catalytic mechanism. Residues 73 to 75 (VES) and 92 to 93 (HE) contribute to the substrate site.

Belongs to the GTP cyclohydrolase I family. QueF type 1 subfamily.

The protein resides in the cytoplasm. The enzyme catalyses 7-aminomethyl-7-carbaguanine + 2 NADP(+) = 7-cyano-7-deazaguanine + 2 NADPH + 3 H(+). It participates in tRNA modification; tRNA-queuosine biosynthesis. In terms of biological role, catalyzes the NADPH-dependent reduction of 7-cyano-7-deazaguanine (preQ0) to 7-aminomethyl-7-deazaguanine (preQ1). The sequence is that of NADPH-dependent 7-cyano-7-deazaguanine reductase from Bacteroides thetaiotaomicron (strain ATCC 29148 / DSM 2079 / JCM 5827 / CCUG 10774 / NCTC 10582 / VPI-5482 / E50).